Here is a 396-residue protein sequence, read N- to C-terminus: MKRRHLPPVLVLLLLSILSLSFRRRLLVLQGPPSSSSSSRHPVGDPLLRRLAADDGAGSSQILAEAAALFANASISTFPSLGNHHRLLYLRMPYAFSPRAPPRPKTVARLRVPVDALPPDGKLLASFRASLGSFLAARRRRGRGGNVAGVMRDLAGVLGRRYRTCAVVGNSGVLLGSGRGPQIDAHDLVIRLNNARVAGFAADVGVKTSLSFVNSNILHICAARNAITRAACGCHPYGGEVPMAMYVCQPAHLLDALICNATATPSSPFPLLVTDARLDALCARIAKYYSLRRFVSATGEPAANWTRRHDERYFHYSSGMQAVVMALGVCDEVSLFGFGKSPGAKHHYHTNQKKELDLHDYEAEYDFYGDLQARPAAVPFLDDAHGFTVPPVRLHR.

The Cytoplasmic segment spans residues 1–6 (MKRRHL). Residues 7–23 (PPVLVLLLLSILSLSFR) traverse the membrane as a helical; Signal-anchor for type II membrane protein segment. The Lumenal portion of the chain corresponds to 24–396 (RRLLVLQGPP…FTVPPVRLHR (373 aa)). Asparagine 72, asparagine 260, and asparagine 304 each carry an N-linked (GlcNAc...) asparagine glycan.

It belongs to the glycosyltransferase 29 family.

It localises to the golgi apparatus membrane. Does not possess sialyltransferase-like activity in vitro. In Oryza sativa subsp. indica (Rice), this protein is Sialyltransferase-like protein 2.